Here is a 373-residue protein sequence, read N- to C-terminus: 3 beta-hydroxysteroid dehydrogenase/Delta 5--&gt;4-isomerase type 3 (373 aa).

Catalysis depends on Tyr155, which acts as the Proton acceptor. Position 159 (Lys159) interacts with NAD(+). A helical transmembrane segment spans residues 288–308 (VPILYWLAFLLETVSFLLSPI).

Belongs to the 3-beta-HSD family. Liver and kidney. Greater expression in liver.

Its subcellular location is the endoplasmic reticulum membrane. It localises to the mitochondrion membrane. The enzyme catalyses a 3beta-hydroxy-Delta(5)-steroid + NAD(+) = a 3-oxo-Delta(5)-steroid + NADH + H(+). The catalysed reaction is a 3-oxo-Delta(5)-steroid = a 3-oxo-Delta(4)-steroid. Its pathway is lipid metabolism; steroid biosynthesis. Functionally, 3-beta-HSD is a bifunctional enzyme, that catalyzes the oxidative conversion of Delta(5)-ene-3-beta-hydroxy steroid, and the oxidative conversion of ketosteroids. The 3-beta-HSD enzymatic system plays a crucial role in the biosynthesis of all classes of hormonal steroids. The protein is 3 beta-hydroxysteroid dehydrogenase/Delta 5--&gt;4-isomerase type 3 (Hsd3b3) of Mus musculus (Mouse).